The chain runs to 2946 residues: Neurobeachin (2946 aa).

Residues 971-995 form a disordered region; that stretch reads ENIKKGKKGNVSTISGLSSQTTGAK. Over residues 980–993 the composition is skewed to polar residues; that stretch reads NVSTISGLSSQTTG. Serine 1011 and serine 1014 each carry phosphoserine. Residues 1326–1368 form a WD 1 repeat; the sequence is TTMFRIPEFKWSPMHQRLLTDLLFALETDVHVWRSHSTKSVMD. Disordered stretches follow at residues 1490 to 1531, 1651 to 1675, 1711 to 1731, and 1841 to 1860; these read QRDR…LSPI, TIKE…HTDS, VKKS…PATS, and GAVD…VNGA. Over residues 1497 to 1517 the composition is skewed to polar residues; it reads SSHGSSKPQEVPQSVTATAAS. At serine 1529 the chain carries Phosphoserine. 2 positions are modified to phosphoserine: serine 1714 and serine 1717. The segment covering 1716-1731 has biased composition (polar residues); that stretch reads ESLTENPSETLKPATS. Residues 1845-1855 show a composition bias toward low complexity; sequence SGSSSSSSSSS. At serine 2138 the chain carries Phosphoserine. The region spanning 2147-2255 is the BEACH-type PH domain; the sequence is NLAGPVVLST…TVKKVVYSLP (109 aa). The BEACH domain maps to 2274–2563; it reads ATPRQLYKSS…QLLIEPHPPR (290 aa). Serine 2575 is subject to Phosphoserine. WD repeat units lie at residues 2718–2761, 2778–2818, 2860–2899, and 2902–2941; these read GHWD…HIIG, GHDH…RALE, EIND…QLYI, and GCDA…WHYE.

It belongs to the WD repeat neurobeachin family. In terms of assembly, interacts with RII subunit of PKA. As to expression, predominant in many brain structures. Also expressed at medium levels in spleen, thymus, prostate, testis and ovary. Low level expression is seen in heart, kidney, pancreas, skeletal muscle and intestine.

It localises to the cytoplasm. The protein localises to the membrane. In terms of biological role, binds to type II regulatory subunits of protein kinase A and anchors/targets them to the membrane. May anchor the kinase to cytoskeletal and/or organelle-associated proteins. This is Neurobeachin from Homo sapiens (Human).